A 201-amino-acid chain; its full sequence is ATP-dependent Clp protease proteolytic subunit (201 aa).

Ser98 acts as the Nucleophile in catalysis. His123 is an active-site residue.

Belongs to the peptidase S14 family. In terms of assembly, fourteen ClpP subunits assemble into 2 heptameric rings which stack back to back to give a disk-like structure with a central cavity, resembling the structure of eukaryotic proteasomes.

It localises to the cytoplasm. It carries out the reaction Hydrolysis of proteins to small peptides in the presence of ATP and magnesium. alpha-casein is the usual test substrate. In the absence of ATP, only oligopeptides shorter than five residues are hydrolyzed (such as succinyl-Leu-Tyr-|-NHMec, and Leu-Tyr-Leu-|-Tyr-Trp, in which cleavage of the -Tyr-|-Leu- and -Tyr-|-Trp bonds also occurs).. Its function is as follows. Cleaves peptides in various proteins in a process that requires ATP hydrolysis. Has a chymotrypsin-like activity. Plays a major role in the degradation of misfolded proteins. This chain is ATP-dependent Clp protease proteolytic subunit, found in Rickettsia felis (strain ATCC VR-1525 / URRWXCal2) (Rickettsia azadi).